A 236-amino-acid chain; its full sequence is 2-C-methyl-D-erythritol 4-phosphate cytidylyltransferase (236 aa).

This sequence belongs to the IspD/TarI cytidylyltransferase family. IspD subfamily.

It catalyses the reaction 2-C-methyl-D-erythritol 4-phosphate + CTP + H(+) = 4-CDP-2-C-methyl-D-erythritol + diphosphate. It participates in isoprenoid biosynthesis; isopentenyl diphosphate biosynthesis via DXP pathway; isopentenyl diphosphate from 1-deoxy-D-xylulose 5-phosphate: step 2/6. Its function is as follows. Catalyzes the formation of 4-diphosphocytidyl-2-C-methyl-D-erythritol from CTP and 2-C-methyl-D-erythritol 4-phosphate (MEP). The protein is 2-C-methyl-D-erythritol 4-phosphate cytidylyltransferase of Burkholderia pseudomallei (strain 1106a).